The sequence spans 60 residues: uncharacterized protein (60 aa).

Residues 11–33 (VFTVGFITGGVTPVMVSFVWPAA) form a helical membrane-spanning segment. Residues Asn-40 and Asn-57 are each glycosylated (N-linked (GlcNAc...) asparagine; by host).

It localises to the host membrane. This is an uncharacterized protein from African swine fever virus (strain Badajoz 1971 Vero-adapted) (Ba71V).